A 570-amino-acid polypeptide reads, in one-letter code: Sulfite reductase [NADPH] hemoprotein beta-component (570 aa).

4 residues coordinate [4Fe-4S] cluster: Cys-434, Cys-440, Cys-479, and Cys-483. Residue Cys-483 coordinates siroheme.

Belongs to the nitrite and sulfite reductase 4Fe-4S domain family. As to quaternary structure, alpha(8)-beta(8). The alpha component is a flavoprotein, the beta component is a hemoprotein. Siroheme is required as a cofactor. It depends on [4Fe-4S] cluster as a cofactor.

The catalysed reaction is hydrogen sulfide + 3 NADP(+) + 3 H2O = sulfite + 3 NADPH + 4 H(+). It participates in sulfur metabolism; hydrogen sulfide biosynthesis; hydrogen sulfide from sulfite (NADPH route): step 1/1. Component of the sulfite reductase complex that catalyzes the 6-electron reduction of sulfite to sulfide. This is one of several activities required for the biosynthesis of L-cysteine from sulfate. The polypeptide is Sulfite reductase [NADPH] hemoprotein beta-component (Salmonella enteritidis PT4 (strain P125109)).